The sequence spans 338 residues: Lipoyl synthase (338 aa).

A disordered region spans residues 1 to 22; it reads MTTVQEAVPNLIPTQDVTPRPA. [4Fe-4S] cluster contacts are provided by cysteine 84, cysteine 89, cysteine 95, cysteine 110, cysteine 114, cysteine 117, and serine 324. A Radical SAM core domain is found at 96 to 313; it reads FSGGTATFMI…AEEGYKMGFK (218 aa).

This sequence belongs to the radical SAM superfamily. Lipoyl synthase family. The cofactor is [4Fe-4S] cluster.

The protein localises to the cytoplasm. The enzyme catalyses [[Fe-S] cluster scaffold protein carrying a second [4Fe-4S](2+) cluster] + N(6)-octanoyl-L-lysyl-[protein] + 2 oxidized [2Fe-2S]-[ferredoxin] + 2 S-adenosyl-L-methionine + 4 H(+) = [[Fe-S] cluster scaffold protein] + N(6)-[(R)-dihydrolipoyl]-L-lysyl-[protein] + 4 Fe(3+) + 2 hydrogen sulfide + 2 5'-deoxyadenosine + 2 L-methionine + 2 reduced [2Fe-2S]-[ferredoxin]. It participates in protein modification; protein lipoylation via endogenous pathway; protein N(6)-(lipoyl)lysine from octanoyl-[acyl-carrier-protein]: step 2/2. Functionally, catalyzes the radical-mediated insertion of two sulfur atoms into the C-6 and C-8 positions of the octanoyl moiety bound to the lipoyl domains of lipoate-dependent enzymes, thereby converting the octanoylated domains into lipoylated derivatives. This Pseudomonas entomophila (strain L48) protein is Lipoyl synthase.